Consider the following 161-residue polypeptide: Large ribosomal subunit protein uL15 (161 aa).

The interval 1–42 is disordered; it reads MKLSDIADNAGSRKKRMRVGRGIGSGKGKQSGRGGKGQTARS. Residues 21–37 show a composition bias toward gly residues; it reads RGIGSGKGKQSGRGGKG.

Belongs to the universal ribosomal protein uL15 family. Part of the 50S ribosomal subunit.

Binds to the 23S rRNA. The sequence is that of Large ribosomal subunit protein uL15 from Bradyrhizobium diazoefficiens (strain JCM 10833 / BCRC 13528 / IAM 13628 / NBRC 14792 / USDA 110).